A 309-amino-acid polypeptide reads, in one-letter code: Electron transfer flavoprotein subunit alpha (309 aa).

Leu253–Asp281 provides a ligand contact to FAD.

Belongs to the ETF alpha-subunit/FixB family. Heterodimer of an alpha and a beta subunit. Requires FAD as cofactor.

Its function is as follows. The electron transfer flavoprotein serves as a specific electron acceptor for other dehydrogenases. It transfers the electrons to the main respiratory chain via ETF-ubiquinone oxidoreductase (ETF dehydrogenase). The polypeptide is Electron transfer flavoprotein subunit alpha (etfA) (Pseudomonas aeruginosa (strain ATCC 15692 / DSM 22644 / CIP 104116 / JCM 14847 / LMG 12228 / 1C / PRS 101 / PAO1)).